The chain runs to 99 residues: C-C motif chemokine 17 (99 aa).

The N-terminal stretch at 1–23 (MIPLKMLLLVTLLLGASLQVTHA) is a signal peptide. Disulfide bonds link C33-C57 and C34-C73.

The protein belongs to the intercrine beta (chemokine CC) family. As to expression, expressed in thymus, spleen, lymph node, lung and heart.

It is found in the secreted. In terms of biological role, chemokine, which displays chemotactic activity for T lymphocytes, preferentially Th2 cells, but not monocytes or granulocytes. Therefore plays an important role in a wide range of inflammatory and immunological processes. Acts by binding to CCR4 at T-cell surface. Mediates GM-CSF/CSF2-driven pain and inflammation. In the brain, required to maintain the typical, highly branched morphology of hippocampal microglia under homeostatic conditions. May be important for the appropriate adaptation of microglial morphology and synaptic plasticity to acute lipopolysaccharide (LPS)-induced neuroinflammation. Plays a role in wound healing, mainly by inducing fibroblast migration into the wound. The polypeptide is C-C motif chemokine 17 (CCL17) (Canis lupus familiaris (Dog)).